A 91-amino-acid chain; its full sequence is UPF0250 protein PSEEN4821 (91 aa).

This sequence belongs to the UPF0250 family.

The polypeptide is UPF0250 protein PSEEN4821 (Pseudomonas entomophila (strain L48)).